A 260-amino-acid chain; its full sequence is Ribonuclease HII (260 aa).

The RNase H type-2 domain maps to 73-260; it reads LHIAGIDEAG…APVQQQLDIV (188 aa). Positions 79, 80, and 171 each coordinate a divalent metal cation.

It belongs to the RNase HII family. Mn(2+) is required as a cofactor. The cofactor is Mg(2+).

It is found in the cytoplasm. The catalysed reaction is Endonucleolytic cleavage to 5'-phosphomonoester.. Endonuclease that specifically degrades the RNA of RNA-DNA hybrids. The protein is Ribonuclease HII of Desulfitobacterium hafniense (strain DSM 10664 / DCB-2).